We begin with the raw amino-acid sequence, 273 residues long: Putative methyltransferase Cher3 (273 aa).

The 273-residue stretch at 1–273 folds into the CheR-type methyltransferase domain; it reads MTSERNTDIE…VKPQRIFRKS (273 aa). Residues S76, R80, E114, D137, 199-200, and 215-216 each bind S-adenosyl-L-methionine; these read SL and RN.

The protein is Putative methyltransferase Cher3 (cheR3) of Pseudomonas putida (strain ATCC 47054 / DSM 6125 / CFBP 8728 / NCIMB 11950 / KT2440).